Reading from the N-terminus, the 931-residue chain is Probable ubiquitin-like-specific protease 2B (931 aa).

A disordered region spans residues 204-224; the sequence is SLSDRSALSEASDSEDDEEDW. The segment covering 215 to 224 has biased composition (acidic residues); that stretch reads SDSEDDEEDW. Active-site residues include His-489, Asp-522, and Cys-577. The tract at residues 825 to 931 is disordered; sequence HEEEIDESPP…PTGEAEEMEK (107 aa). Polar residues predominate over residues 839 to 851; the sequence is SLKSATVGSNTAD. Positions 873-904 are enriched in basic and acidic residues; that stretch reads NDRDEEKPLEHDLEIGDKTSEDVGDDCDQKEP.

The protein belongs to the peptidase C48 family.

In terms of biological role, protease that catalyzes two essential functions in the SUMO pathway: processing of full-length SUMOs to their mature forms and deconjugation of SUMO from targeted proteins. The chain is Probable ubiquitin-like-specific protease 2B (ULP2B) from Arabidopsis thaliana (Mouse-ear cress).